Here is a 236-residue protein sequence, read N- to C-terminus: Ion-translocating oxidoreductase complex subunit E (236 aa).

6 helical membrane-spanning segments follow: residues 18 to 38 (ALVQ…ATNA), 39 to 59 (LGLG…VSAL), 69 to 89 (IPIY…LINA), 92 to 112 (FGLY…CIVI), 128 to 148 (ALDG…LGAL), and 182 to 202 (PFLL…MLAF). The interval 217-236 (RSAVGQALRGAAPTDNHEQA) is disordered.

This sequence belongs to the NqrDE/RnfAE family. In terms of assembly, the complex is composed of six subunits: RnfA, RnfB, RnfC, RnfD, RnfE and RnfG.

The protein localises to the cell inner membrane. Functionally, part of a membrane-bound complex that couples electron transfer with translocation of ions across the membrane. This is Ion-translocating oxidoreductase complex subunit E from Edwardsiella ictaluri (strain 93-146).